The following is a 660-amino-acid chain: GTP-binding protein BRASSINAZOLE INSENSITIVE PALE GREEN 2, chloroplastic (660 aa).

The transit peptide at 1 to 53 (MVVLISSTVTICNVKPKLEDGNFRVSRLIHRPEVPFFSGLSNEKKKKCAVSVM) directs the protein to the chloroplast. Disordered stretches follow at residues 127–158 (EGDEHVENDELAGFEMVDDDADEEEEGEDDEM) and 191–212 (NDVELDGFAPAGVGYGNVTEEK). A compositionally biased stretch (acidic residues) spans 130–158 (EHVENDELAGFEMVDDDADEEEEGEDDEM). The 185-residue stretch at 273-457 (STRLIKPMSN…MYDTPGLLHP (185 aa)) folds into the CP-type G domain.

This sequence belongs to the TRAFAC class YlqF/YawG GTPase family. In terms of assembly, binds to chloroplast 16S and 23S ribosomal RNAs. As to expression, mostly expressed in stems, petioles, leaves and flowers and, at low levels, also in roots.

Its subcellular location is the plastid. The protein localises to the chloroplast stroma. Its function is as follows. Required for brassinosteroid- (BR) mediated post-transcriptional and translational regulation in the chloroplast, including accumulation of chloroplast rRNA. Involved in chloroplast differentiation. In Arabidopsis thaliana (Mouse-ear cress), this protein is GTP-binding protein BRASSINAZOLE INSENSITIVE PALE GREEN 2, chloroplastic.